A 1049-amino-acid chain; its full sequence is Presequence protease, mitochondrial (1049 aa).

The N-terminal 39 residues, 1-39 (MLRSYLHLGRHRTPAFRQPLGRLLRPTASILQYAQSRTL), are a transit peptide targeting the mitochondrion. His113 contributes to the Zn(2+) binding site. Glu116 functions as the Proton acceptor in the catalytic mechanism. His117 contacts Zn(2+). The active site involves Glu189. Residue Glu222 participates in Zn(2+) binding.

This sequence belongs to the peptidase M16 family. PreP subfamily. Monomer and homodimer; homodimerization is induced by binding of the substrate. Requires Zn(2+) as cofactor.

It localises to the mitochondrion intermembrane space. Its subcellular location is the mitochondrion matrix. Functionally, degrades mitochondrial transit peptides after their cleavage in the intermembrane space or in the matrix, and presequence peptides; clearance of these peptides is required to keep the presequence processing machinery running. Preferentially cleaves the N-terminal side of paired basic amino acid residues. Also degrades other unstructured peptides. May function as an ATP-dependent peptidase as opposed to a metalloendopeptidase. The polypeptide is Presequence protease, mitochondrial (cym1) (Emericella nidulans (strain FGSC A4 / ATCC 38163 / CBS 112.46 / NRRL 194 / M139) (Aspergillus nidulans)).